The primary structure comprises 468 residues: 6-phospho-beta-galactosidase (468 aa).

D-galactose 6-phosphate contacts are provided by Gln19, His116, Asn159, Glu160, and Asn297. Glu160 functions as the Proton donor in the catalytic mechanism. Glu375 serves as the catalytic Nucleophile. The D-galactose 6-phosphate site is built by Ser428, Trp429, Lys435, and Tyr437.

It belongs to the glycosyl hydrolase 1 family.

It catalyses the reaction a 6-phospho-beta-D-galactoside + H2O = D-galactose 6-phosphate + an alcohol. Its pathway is carbohydrate metabolism; lactose degradation; D-galactose 6-phosphate and beta-D-glucose from lactose 6-phosphate: step 1/1. In Streptococcus pyogenes serotype M12 (strain MGAS2096), this protein is 6-phospho-beta-galactosidase.